Consider the following 978-residue polypeptide: Translation initiation factor IF-2 (978 aa).

Disordered stretches follow at residues 107-129 (AEAP…NLEL) and 146-387 (QEEE…HRVQ). The segment covering 146–169 (QEEELSERRRQREEQEARSREASE) has biased composition (basic and acidic residues). Over residues 170-186 (KAAAVAAEAAEAAAAQA) the composition is skewed to low complexity. The span at 215 to 259 (AEKEQHLAKEKGLAREKELAESKARAAEDVVRAADLGDRRRKAES) shows a compositional bias: basic and acidic residues. 2 stretches are compositionally biased toward low complexity: residues 295–326 (KPAA…AGAG) and 349–361 (PTRG…GAGR). Basic and acidic residues predominate over residues 375-386 (GSSDRDRDDHRV). Residues 478–647 (PRAPVVTVMG…LLQAEVLELK (170 aa)) enclose the tr-type G domain. The tract at residues 487 to 494 (GHVDHGKT) is G1. 487-494 (GHVDHGKT) is a binding site for GTP. Residues 512-516 (GITQH) are G2. The G3 stretch occupies residues 533–536 (DTPG). GTP is bound by residues 533–537 (DTPGH) and 587–590 (NKID). Residues 587–590 (NKID) form a G4 region. The G5 stretch occupies residues 623 to 625 (SAK).

This sequence belongs to the TRAFAC class translation factor GTPase superfamily. Classic translation factor GTPase family. IF-2 subfamily.

The protein resides in the cytoplasm. Its function is as follows. One of the essential components for the initiation of protein synthesis. Protects formylmethionyl-tRNA from spontaneous hydrolysis and promotes its binding to the 30S ribosomal subunits. Also involved in the hydrolysis of GTP during the formation of the 70S ribosomal complex. The chain is Translation initiation factor IF-2 from Albidiferax ferrireducens (strain ATCC BAA-621 / DSM 15236 / T118) (Rhodoferax ferrireducens).